The chain runs to 1237 residues: Anion exchange protein 2 (1237 aa).

A disordered region spans residues 1-238 (MSSAPRRPAS…YNLQERRRIG (238 aa)). At 1-703 (MSSAPRRPAS…SDFRDALDPQ (703 aa)) the chain is on the cytoplasmic side. Composition is skewed to basic and acidic residues over residues 38–48 (LRTLGVERFEE) and 57–74 (GGEE…EYHR). 2 stretches are compositionally biased toward basic residues: residues 75–84 (QSSHHIHHPL) and 93–109 (RRRK…RRRP). A phosphoserine mark is found at S112, S131, S144, S170, S172, and S239. Positions 119 to 132 (TIEEGEEDEEEASE) are enriched in acidic residues. T253 carries the post-translational modification Phosphothreonine. At K270 the chain carries N6-methyllysine. Positions 285–316 (VRKNAKGSTQAAREGREPGPTPRARPRAPHKP) are disordered. S439 bears the Phosphoserine mark. The interval 445–466 (SLLGHHHAQGTESDPHVTEPLI) is disordered. 4 consecutive transmembrane segments (helical) span residues 704-727 (CLAA…GLLG), 733-770 (LIGV…LLVF), 790-812 (VWIG…SFLV), and 822-843 (IFAF…IKIF). Positions 704–1237 (CLAAVIFIYF…DEYNEMPMPV (534 aa)) are membrane (anion exchange). The Extracellular portion of the chain corresponds to 844–896 (QEHPLHGCSGSNDSEAGSSSSSNMTWATTILVPDNSSASGQSGQEKPRGQPNT). 3 N-linked (GlcNAc...) asparagine glycosylation sites follow: N855, N866, and N878. The helical transmembrane segment at 897-914 (ALLSLVLMAGTFFIAFFL) threads the bilayer. Residues 915–929 (RKFKNSRFFPGRIRR) are Cytoplasmic-facing. 5 consecutive transmembrane segments (helical) span residues 930 to 950 (VIGD…DYSI), 984 to 1006 (PFPV…LIFM), 1032 to 1053 (LLLI…LAAA), 1087 to 1132 (VTGL…IQFY), and 1159 to 1195 (MHLF…TVPL). C1169 is lipidated: S-palmitoyl cysteine.

The protein belongs to the anion exchanger (TC 2.A.31) family. Expressed in the choroid plexus epithelium (at protein level). Expressed in the parotid gland and sublingual salivary gland acinar cells (at protein level). As to expression, widely expressed at similar levels in all tissues examined. Expressed in the testis. In terms of tissue distribution, predominantly expressed in stomach although they are also detected at lower levels in other tissues. Expressed in the testis. Stomach-specific. As to expression, expressed at slightly higher levels in lung and stomach than in other tissues.

The protein localises to the apical cell membrane. The protein resides in the basolateral cell membrane. The enzyme catalyses hydrogencarbonate(in) + chloride(out) = hydrogencarbonate(out) + chloride(in). Inhibited by 4,4'-diisothiocyanatostilbene-2,2'-disulfonic acid (DIDS) and acetazolamide. Muscarinic receptor stimulation enhances activity through a Ca(2+)-dependent mechanism. Functionally, sodium-independent anion exchanger which mediates the electroneutral exchange of chloride for bicarbonate ions across the cell membrane. Plays an important role in osteoclast differentiation and function. Regulates bone resorption and calpain-dependent actin cytoskeleton organization in osteoclasts via anion exchange-dependent control of pH. Essential for intracellular pH regulation in CD8(+) T-cells upon CD3 stimulation, modulating CD8(+) T-cell responses. Plays a critical role in male fertility and spermiogenesis. The sequence is that of Anion exchange protein 2 (Slc4a2) from Mus musculus (Mouse).